A 59-amino-acid chain; its full sequence is Large ribosomal subunit protein bL33 (59 aa).

The protein belongs to the bacterial ribosomal protein bL33 family.

The sequence is that of Large ribosomal subunit protein bL33 from Borrelia recurrentis (strain A1).